A 383-amino-acid polypeptide reads, in one-letter code: MTKPLRIGIVAGELSGDTLGEGFIKSIKAQYPDAEFVGIGGPKMIAQGCDSLFDMEELAVMGLVEVLGRLPRLLKVKAELVRYFTQNPPDVFIGIDAPDFNLRLEKTLKDNGIKTVHYVSPSVWAWRPKRIFKIDAATDLVLAFLPFEKAFYDKYNVACEFIGHTLADAIPMETDKIAARDLLGLEQEREWLAVLPGSRGGEVALIAKPFIETCQRIHKQHPNMGFVVAAVNEKRREQFETIWKATAPELDFVIIQDTARNVMTAADAVLLASGTVALECMLVKRPMVVGYQVNKLTGWIAQKLSITEFVSLPNVLAGKELVQEFIQEECHPDFLYPAMEKVLNNDNRELIEKFTEMHQWIRKDADKQAANAVLRLINKETAE.

The protein belongs to the LpxB family.

It carries out the reaction a lipid X + a UDP-2-N,3-O-bis[(3R)-3-hydroxyacyl]-alpha-D-glucosamine = a lipid A disaccharide + UDP + H(+). It participates in bacterial outer membrane biogenesis; LPS lipid A biosynthesis. Condensation of UDP-2,3-diacylglucosamine and 2,3-diacylglucosamine-1-phosphate to form lipid A disaccharide, a precursor of lipid A, a phosphorylated glycolipid that anchors the lipopolysaccharide to the outer membrane of the cell. This chain is Lipid-A-disaccharide synthase, found in Aliivibrio fischeri (strain ATCC 700601 / ES114) (Vibrio fischeri).